We begin with the raw amino-acid sequence, 184 residues long: Probable RNA 2'-phosphotransferase (184 aa).

This sequence belongs to the KptA/TPT1 family.

In terms of biological role, removes the 2'-phosphate from RNA via an intermediate in which the phosphate is ADP-ribosylated by NAD followed by a presumed transesterification to release the RNA and generate ADP-ribose 1''-2''-cyclic phosphate (APPR&gt;P). May function as an ADP-ribosylase. The polypeptide is Probable RNA 2'-phosphotransferase (Escherichia coli (strain K12 / MC4100 / BW2952)).